We begin with the raw amino-acid sequence, 608 residues long: Signal transduction histidine-protein kinase AtoS (608 aa).

Residues 1 to 15 (MHYMKWIYPRRLRNQ) lie on the Cytoplasmic side of the membrane. A helical membrane pass occupies residues 16–36 (MILMAILMVIVPTLTIGYIVE). The Periplasmic portion of the chain corresponds to 37-189 (TEGRSAVLSE…DIRRQAWKMD (153 aa)). The helical transmembrane segment at 190–210 (VRIIIVLTAGLLISLLLIVLF) threads the bilayer. Over 211–608 (SRRLSANIDI…PINPQGNQTV (398 aa)) the chain is Cytoplasmic. The HAMP domain maps to 212–262 (RRLSANIDIITDGLSTLAQNIPTRLPQLPGEMGQISQSVNNLAQALRETRT). Residues 260-305 (TRTLNDLIIENAADGVIAIDRQGDVTTMNPAAEVITGYQRHELVGQ) form the PAS domain. Residues 326-382 (HGTEHVALEISFPGRDRTIELSVTTSRIHNTHGEMIGALVIFSDLTARKETQRRMAQ) enclose the PAC domain. The 208-residue stretch at 395–602 (GVAHEVRNPL…TFTLILPINP (208 aa)) folds into the Histidine kinase domain. Histidine 398 is modified (phosphohistidine; by autocatalysis).

In terms of assembly, homodimer. Post-translationally, autophosphorylated. Each AtoS molecule may phosphorylate its partner within the dimer rather than phosphorylating itself.

The protein localises to the cell inner membrane. The enzyme catalyses ATP + protein L-histidine = ADP + protein N-phospho-L-histidine.. Functionally, member of the two-component regulatory system AtoS/AtoC. In the presence of acetoacetate, AtoS/AtoC stimulates the expression of the atoDAEB operon, leading to short chain fatty acid catabolism and activation of the poly-(R)-3-hydroxybutyrate (cPHB) biosynthetic pathway. Also induces the operon in response to spermidine. Involved in the regulation of motility and chemotaxis, via transcriptional induction of the flagellar regulon. AtoS is a membrane-associated kinase that phosphorylates and activates AtoC in response to environmental signals. This Escherichia coli (strain K12) protein is Signal transduction histidine-protein kinase AtoS (atoS).